The primary structure comprises 341 residues: Glycerol-3-phosphate dehydrogenase [NAD(P)+] (341 aa).

NADPH contacts are provided by serine 15, tryptophan 16, arginine 36, and lysine 110. Lysine 110, glycine 139, and serine 141 together coordinate sn-glycerol 3-phosphate. An NADPH-binding site is contributed by alanine 143. Residues lysine 194, aspartate 247, serine 257, arginine 258, and asparagine 259 each contribute to the sn-glycerol 3-phosphate site. The active-site Proton acceptor is lysine 194. An NADPH-binding site is contributed by arginine 258. Positions 282 and 284 each coordinate NADPH.

Belongs to the NAD-dependent glycerol-3-phosphate dehydrogenase family.

The protein resides in the cytoplasm. The catalysed reaction is sn-glycerol 3-phosphate + NAD(+) = dihydroxyacetone phosphate + NADH + H(+). It carries out the reaction sn-glycerol 3-phosphate + NADP(+) = dihydroxyacetone phosphate + NADPH + H(+). It functions in the pathway membrane lipid metabolism; glycerophospholipid metabolism. In terms of biological role, catalyzes the reduction of the glycolytic intermediate dihydroxyacetone phosphate (DHAP) to sn-glycerol 3-phosphate (G3P), the key precursor for phospholipid synthesis. In Xanthomonas euvesicatoria pv. vesicatoria (strain 85-10) (Xanthomonas campestris pv. vesicatoria), this protein is Glycerol-3-phosphate dehydrogenase [NAD(P)+].